We begin with the raw amino-acid sequence, 156 residues long: Small ribosomal subunit protein uS7 (156 aa).

This sequence belongs to the universal ribosomal protein uS7 family. As to quaternary structure, part of the 30S ribosomal subunit. Contacts proteins S9 and S11.

Functionally, one of the primary rRNA binding proteins, it binds directly to 16S rRNA where it nucleates assembly of the head domain of the 30S subunit. Is located at the subunit interface close to the decoding center, probably blocks exit of the E-site tRNA. In Campylobacter fetus subsp. fetus (strain 82-40), this protein is Small ribosomal subunit protein uS7.